A 64-amino-acid chain; its full sequence is UPF0370 protein YPA_2246 (64 aa).

Residues 3 to 23 traverse the membrane as a helical segment; the sequence is WLADYWWIILILLVGMILNGI. The segment covering 36-47 has biased composition (basic and acidic residues); the sequence is DNKPELPPHRDN. Positions 36 to 64 are disordered; that stretch reads DNKPELPPHRDNNAQWDDEDDWPDQNKKK.

It belongs to the UPF0370 family.

Its subcellular location is the cell membrane. This chain is UPF0370 protein YPA_2246, found in Yersinia pestis bv. Antiqua (strain Antiqua).